The sequence spans 117 residues: Ribonuclease P protein component (117 aa).

The protein belongs to the RnpA family. In terms of assembly, consists of a catalytic RNA component (M1 or rnpB) and a protein subunit.

The enzyme catalyses Endonucleolytic cleavage of RNA, removing 5'-extranucleotides from tRNA precursor.. RNaseP catalyzes the removal of the 5'-leader sequence from pre-tRNA to produce the mature 5'-terminus. It can also cleave other RNA substrates such as 4.5S RNA. The protein component plays an auxiliary but essential role in vivo by binding to the 5'-leader sequence and broadening the substrate specificity of the ribozyme. The polypeptide is Ribonuclease P protein component (Limosilactobacillus reuteri subsp. reuteri (strain JCM 1112) (Lactobacillus reuteri)).